A 262-amino-acid chain; its full sequence is Acyl-[acyl-carrier-protein]--UDP-N-acetylglucosamine O-acyltransferase (262 aa).

This sequence belongs to the transferase hexapeptide repeat family. LpxA subfamily. As to quaternary structure, homotrimer.

The protein localises to the cytoplasm. It carries out the reaction a (3R)-hydroxyacyl-[ACP] + UDP-N-acetyl-alpha-D-glucosamine = a UDP-3-O-[(3R)-3-hydroxyacyl]-N-acetyl-alpha-D-glucosamine + holo-[ACP]. The protein operates within glycolipid biosynthesis; lipid IV(A) biosynthesis; lipid IV(A) from (3R)-3-hydroxytetradecanoyl-[acyl-carrier-protein] and UDP-N-acetyl-alpha-D-glucosamine: step 1/6. In terms of biological role, involved in the biosynthesis of lipid A, a phosphorylated glycolipid that anchors the lipopolysaccharide to the outer membrane of the cell. This is Acyl-[acyl-carrier-protein]--UDP-N-acetylglucosamine O-acyltransferase from Vibrio vulnificus (strain CMCP6).